We begin with the raw amino-acid sequence, 621 residues long: tRNA uridine 5-carboxymethylaminomethyl modification enzyme MnmG (621 aa).

Residue 8 to 13 (GAGHAG) participates in FAD binding. 269–283 (GPRYCPSIEDKIHRF) is an NAD(+) binding site.

This sequence belongs to the MnmG family. As to quaternary structure, homodimer. Heterotetramer of two MnmE and two MnmG subunits. FAD serves as cofactor.

It localises to the cytoplasm. Its function is as follows. NAD-binding protein involved in the addition of a carboxymethylaminomethyl (cmnm) group at the wobble position (U34) of certain tRNAs, forming tRNA-cmnm(5)s(2)U34. This chain is tRNA uridine 5-carboxymethylaminomethyl modification enzyme MnmG, found in Chlorobium phaeovibrioides (strain DSM 265 / 1930) (Prosthecochloris vibrioformis (strain DSM 265)).